The chain runs to 190 residues: 2-phospho-L-lactate guanylyltransferase (190 aa).

The protein belongs to the CofC family. As to quaternary structure, homodimer.

It carries out the reaction (2S)-2-phospholactate + GTP + H(+) = (2S)-lactyl-2-diphospho-5'-guanosine + diphosphate. It functions in the pathway cofactor biosynthesis; coenzyme F420 biosynthesis. Guanylyltransferase that catalyzes the activation of (2S)-2-phospholactate (2-PL) as (2S)-lactyl-2-diphospho-5'-guanosine, via the condensation of 2-PL with GTP. It is involved in the biosynthesis of coenzyme F420, a hydride carrier cofactor. This Methanopyrus kandleri (strain AV19 / DSM 6324 / JCM 9639 / NBRC 100938) protein is 2-phospho-L-lactate guanylyltransferase.